A 157-amino-acid chain; its full sequence is Endoribonuclease YbeY (157 aa).

His-114, His-118, and His-124 together coordinate Zn(2+).

It belongs to the endoribonuclease YbeY family. Requires Zn(2+) as cofactor.

The protein localises to the cytoplasm. Functionally, single strand-specific metallo-endoribonuclease involved in late-stage 70S ribosome quality control and in maturation of the 3' terminus of the 16S rRNA. The chain is Endoribonuclease YbeY from Edwardsiella ictaluri (strain 93-146).